We begin with the raw amino-acid sequence, 487 residues long: Probable cytochrome P450 313a5 (487 aa).

Tyr223 is modified (phosphotyrosine). Cys433 provides a ligand contact to heme.

It belongs to the cytochrome P450 family. Heme serves as cofactor.

The protein resides in the endoplasmic reticulum membrane. It is found in the microsome membrane. In terms of biological role, may be involved in the metabolism of insect hormones and in the breakdown of synthetic insecticides. The sequence is that of Probable cytochrome P450 313a5 (Cyp313a5) from Drosophila melanogaster (Fruit fly).